A 238-amino-acid chain; its full sequence is uncharacterized protein (238 aa).

The next 3 membrane-spanning stretches (helical) occupy residues Y75 to Y95, I116 to I136, and I172 to I192. The interval D200–N238 is disordered. A compositionally biased stretch (polar residues) spans M206 to T220. The segment covering T229–N238 has biased composition (basic and acidic residues).

It is found in the membrane. This is an uncharacterized protein from Schizosaccharomyces pombe (strain 972 / ATCC 24843) (Fission yeast).